The primary structure comprises 440 residues: Glutamate--tRNA ligase 2 (440 aa).

The 'HIGH' region motif lies at 8–18; sequence PSPTGYLHVGN. A 'KMSKS' region motif is present at residues 239-243; the sequence is ALSKR. Lys-242 contacts ATP.

This sequence belongs to the class-I aminoacyl-tRNA synthetase family. Glutamate--tRNA ligase type 1 subfamily. In terms of assembly, monomer.

It is found in the cytoplasm. It carries out the reaction tRNA(Glu) + L-glutamate + ATP = L-glutamyl-tRNA(Glu) + AMP + diphosphate. Its function is as follows. Catalyzes the attachment of glutamate to tRNA(Glu) in a two-step reaction: glutamate is first activated by ATP to form Glu-AMP and then transferred to the acceptor end of tRNA(Glu). This is Glutamate--tRNA ligase 2 from Dinoroseobacter shibae (strain DSM 16493 / NCIMB 14021 / DFL 12).